A 272-amino-acid polypeptide reads, in one-letter code: Indole-3-glycerol phosphate synthase (272 aa).

Belongs to the TrpC family.

It catalyses the reaction 1-(2-carboxyphenylamino)-1-deoxy-D-ribulose 5-phosphate + H(+) = (1S,2R)-1-C-(indol-3-yl)glycerol 3-phosphate + CO2 + H2O. Its pathway is amino-acid biosynthesis; L-tryptophan biosynthesis; L-tryptophan from chorismate: step 4/5. The protein is Indole-3-glycerol phosphate synthase of Mycobacterium tuberculosis (strain ATCC 25177 / H37Ra).